Reading from the N-terminus, the 279-residue chain is Large ribosomal subunit protein uL2 (279 aa).

2 disordered regions span residues 29–53 and 224–279; these read PEKS…TTRH and VAMN…KKRK. The span at 253 to 268 shows a compositional bias: basic and acidic residues; sequence KEGRTRHPNKESDKLI. Positions 269 to 279 are enriched in basic residues; that stretch reads VRRRNAGKKRK.

The protein belongs to the universal ribosomal protein uL2 family. Part of the 50S ribosomal subunit. Forms a bridge to the 30S subunit in the 70S ribosome.

Functionally, one of the primary rRNA binding proteins. Required for association of the 30S and 50S subunits to form the 70S ribosome, for tRNA binding and peptide bond formation. It has been suggested to have peptidyltransferase activity; this is somewhat controversial. Makes several contacts with the 16S rRNA in the 70S ribosome. The sequence is that of Large ribosomal subunit protein uL2 from Leifsonia xyli subsp. xyli (strain CTCB07).